The following is a 210-amino-acid chain: Na(+)-translocating NADH-quinone reductase subunit D (210 aa).

Transmembrane regions (helical) follow at residues 14–34, 42–62, 72–92, 103–123, 131–151, and 178–198; these read PIVNNNPIALQVLGVCSALAV, LVMALALTAVTAFSNLFISMI, IIVQMTIIASLVIVVDQLLQA, VFVGLIITNCIVMGRAEAYAM, FMDGIGNGLGYGAILLAVGFV, and NGLLLLPPSAFFLIGVLIWII.

This sequence belongs to the NqrDE/RnfAE family. As to quaternary structure, composed of six subunits; NqrA, NqrB, NqrC, NqrD, NqrE and NqrF.

Its subcellular location is the cell inner membrane. The catalysed reaction is a ubiquinone + n Na(+)(in) + NADH + H(+) = a ubiquinol + n Na(+)(out) + NAD(+). In terms of biological role, NQR complex catalyzes the reduction of ubiquinone-1 to ubiquinol by two successive reactions, coupled with the transport of Na(+) ions from the cytoplasm to the periplasm. NqrA to NqrE are probably involved in the second step, the conversion of ubisemiquinone to ubiquinol. The sequence is that of Na(+)-translocating NADH-quinone reductase subunit D from Shewanella baltica (strain OS223).